A 304-amino-acid polypeptide reads, in one-letter code: Non-specific ribonucleoside hydrolase RihC (304 aa).

H233 is a catalytic residue.

This sequence belongs to the IUNH family. RihC subfamily.

In terms of biological role, hydrolyzes both purine and pyrimidine ribonucleosides with a broad-substrate specificity. The polypeptide is Non-specific ribonucleoside hydrolase RihC (Shigella flexneri serotype 5b (strain 8401)).